The chain runs to 514 residues: uncharacterized protein (514 aa).

To E.coli YjjI.

This is an uncharacterized protein from Haemophilus influenzae (strain ATCC 51907 / DSM 11121 / KW20 / Rd).